A 428-amino-acid polypeptide reads, in one-letter code: 3-phosphoshikimate 1-carboxyvinyltransferase (428 aa).

The 3-phosphoshikimate site is built by Lys-19, Ser-20, and Arg-24. A phosphoenolpyruvate-binding site is contributed by Lys-19. The phosphoenolpyruvate site is built by Gly-91 and Arg-119. The 3-phosphoshikimate site is built by Ser-164, Gln-166, Asp-312, and Lys-339. Gln-166 contributes to the phosphoenolpyruvate binding site. The active-site Proton acceptor is the Asp-312. Positions 343 and 386 each coordinate phosphoenolpyruvate.

Belongs to the EPSP synthase family. Monomer.

It is found in the cytoplasm. The catalysed reaction is 3-phosphoshikimate + phosphoenolpyruvate = 5-O-(1-carboxyvinyl)-3-phosphoshikimate + phosphate. The protein operates within metabolic intermediate biosynthesis; chorismate biosynthesis; chorismate from D-erythrose 4-phosphate and phosphoenolpyruvate: step 6/7. Functionally, catalyzes the transfer of the enolpyruvyl moiety of phosphoenolpyruvate (PEP) to the 5-hydroxyl of shikimate-3-phosphate (S3P) to produce enolpyruvyl shikimate-3-phosphate and inorganic phosphate. This chain is 3-phosphoshikimate 1-carboxyvinyltransferase, found in Bacillus subtilis (strain 168).